Consider the following 186-residue polypeptide: CRS2-like protein, chloroplastic (186 aa).

The N-terminal 49 residues, 1–49, are a transit peptide targeting the chloroplast; the sequence is MAMTAASVFGSGGCLELLTSSKAMRGKLWTRLAPFISKRHASTSQTSLS. Residue tyrosine 73 coordinates tRNA. The active-site Proton acceptor is the histidine 78. Positions 123, 125, and 171 each coordinate tRNA.

The protein belongs to the PTH family.

Its subcellular location is the plastid. It is found in the chloroplast. The chain is CRS2-like protein, chloroplastic from Oryza sativa subsp. japonica (Rice).